The chain runs to 487 residues: Cytochrome P450 2C16 (487 aa).

C432 provides a ligand contact to heme.

This sequence belongs to the cytochrome P450 family. Heme serves as cofactor. As to expression, expressed constitutively in liver, lung, testes, and kidney.

It is found in the endoplasmic reticulum membrane. The protein resides in the microsome membrane. It carries out the reaction an organic molecule + reduced [NADPH--hemoprotein reductase] + O2 = an alcohol + oxidized [NADPH--hemoprotein reductase] + H2O + H(+). Its function is as follows. Cytochromes P450 are a group of heme-thiolate monooxygenases. In liver microsomes, this enzyme is involved in an NADPH-dependent electron transport pathway. It oxidizes a variety of structurally unrelated compounds, including steroids, fatty acids, and xenobiotics. In Oryctolagus cuniculus (Rabbit), this protein is Cytochrome P450 2C16 (CYP2C16).